We begin with the raw amino-acid sequence, 294 residues long: 2-methoxy-6-polyprenyl-1,4-benzoquinol methylase, mitochondrial (294 aa).

Residues 1–10 constitute a mitochondrion transit peptide; the sequence is MALRSAAGRL. S-adenosyl-L-methionine is bound by residues Thr-100, Asp-136, and 166–167; that span reads DA.

Belongs to the class I-like SAM-binding methyltransferase superfamily. MenG/UbiE family. In terms of assembly, component of a multi-subunit COQ enzyme complex.

It is found in the mitochondrion inner membrane. It catalyses the reaction a 2-methoxy-6-(all-trans-polyprenyl)benzene-1,4-diol + S-adenosyl-L-methionine = a 5-methoxy-2-methyl-3-(all-trans-polyprenyl)benzene-1,4-diol + S-adenosyl-L-homocysteine + H(+). It participates in cofactor biosynthesis; ubiquinone biosynthesis. Functionally, methyltransferase required for the conversion of 2-polyprenyl-6-methoxy-1,4-benzoquinol (DDMQH2) to 2-polyprenyl-3-methyl-6-methoxy-1,4-benzoquinol (DMQH2). In Oryza sativa subsp. japonica (Rice), this protein is 2-methoxy-6-polyprenyl-1,4-benzoquinol methylase, mitochondrial.